A 123-amino-acid chain; its full sequence is Putative membrane protein insertion efficiency factor (123 aa).

The protein belongs to the UPF0161 family.

The protein localises to the cell inner membrane. Functionally, could be involved in insertion of integral membrane proteins into the membrane. This chain is Putative membrane protein insertion efficiency factor, found in Beijerinckia indica subsp. indica (strain ATCC 9039 / DSM 1715 / NCIMB 8712).